The following is a 380-amino-acid chain: Tryptophan 2,3-dioxygenase (380 aa).

Residues 57–61 (FIITH) and Arg-128 contribute to the substrate site. His-313 lines the heme pocket. Thr-328 lines the substrate pocket.

This sequence belongs to the tryptophan 2,3-dioxygenase family. As to quaternary structure, homotetramer. Dimer of dimers. Heme is required as a cofactor.

It catalyses the reaction L-tryptophan + O2 = N-formyl-L-kynurenine. It functions in the pathway amino-acid degradation; L-tryptophan degradation via kynurenine pathway; L-kynurenine from L-tryptophan: step 1/2. The protein operates within pigment biosynthesis; ommochrome biosynthesis. In terms of biological role, heme-dependent dioxygenase that catalyzes the oxidative cleavage of the L-tryptophan (L-Trp) pyrrole ring and converts L-tryptophan to N-formyl-L-kynurenine. Catalyzes the oxidative cleavage of the indole moiety. This chain is Tryptophan 2,3-dioxygenase, found in Drosophila virilis (Fruit fly).